Reading from the N-terminus, the 534-residue chain is Membrane protein insertase YidC (534 aa).

5 consecutive transmembrane segments (helical) span residues 7 to 27 (IIAV…SEYM), 319 to 339 (AIDL…LDFF), 342 to 362 (YVGN…LVFW), 413 to 433 (GGCL…QALL), and 493 to 513 (VMMF…SGLV).

The protein belongs to the OXA1/ALB3/YidC family. Type 1 subfamily. As to quaternary structure, interacts with the Sec translocase complex via SecD. Specifically interacts with transmembrane segments of nascent integral membrane proteins during membrane integration.

It localises to the cell inner membrane. Functionally, required for the insertion and/or proper folding and/or complex formation of integral membrane proteins into the membrane. Involved in integration of membrane proteins that insert both dependently and independently of the Sec translocase complex, as well as at least some lipoproteins. Aids folding of multispanning membrane proteins. This is Membrane protein insertase YidC from Nitratidesulfovibrio vulgaris (strain ATCC 29579 / DSM 644 / CCUG 34227 / NCIMB 8303 / VKM B-1760 / Hildenborough) (Desulfovibrio vulgaris).